The primary structure comprises 416 residues: Serine/threonine-protein kinase 26 (416 aa).

Ala-2 carries the post-translational modification N-acetylalanine. Position 4 is a phosphoserine (Ser-4). A Protein kinase domain is found at 24–274 (FTKLERIGKG…AKELLKHKFI (251 aa)). Residues 30–38 (IGKGSFGEV) and Lys-53 contribute to the ATP site. The active-site Proton acceptor is Asp-144. Thr-178 carries the post-translational modification Phosphothreonine; by autocatalysis. The segment at 296–343 (AEGHSDEESDSEGSDSESSSRESNPHPEWSFTTVRKKPDPKKLQNGEE) is disordered. 5 positions are modified to phosphoserine: Ser-300, Ser-304, Ser-306, Ser-309, and Ser-325. Phosphothreonine is present on residues Thr-327 and Thr-328. The segment covering 331–340 (KKPDPKKLQN) has biased composition (basic and acidic residues).

This sequence belongs to the protein kinase superfamily. STE Ser/Thr protein kinase family. STE20 subfamily. In terms of assembly, homodimer. Interacts with PDCD10. Interacts with GOLGA2. Interacts with CTTNBP2NL. Interacts with RIPOR1 (via C-terminus); this interaction occurs in a PDCD10-dependent and Rho-independent manner. Interacts with PDCD10; this interaction is required for the association of STK26 with RIPOR1. Part of the core of STRIPAK complexes composed of PP2A catalytic and scaffolding subunits, the striatins (PP2A regulatory subunits), the striatin-associated proteins MOB4, STRIP1 and STRIP2, PDCD10 and members of the STE20 kinases, such as STK24 and STK26. Mg(2+) is required as a cofactor.

Its subcellular location is the cytoplasm. It localises to the golgi apparatus. It carries out the reaction L-seryl-[protein] + ATP = O-phospho-L-seryl-[protein] + ADP + H(+). The enzyme catalyses L-threonyl-[protein] + ATP = O-phospho-L-threonyl-[protein] + ADP + H(+). Interaction with Golgi matrix protein GOLGA2 leads to autophosphorylation on Thr-178, possibly as a consequence of stabilization of dimer formation. May also be activated by C-terminal cleavage. Its function is as follows. Serine/threonine-protein kinase that acts as a mediator of cell growth. Modulates apoptosis. In association with STK24 negatively regulates Golgi reorientation in polarized cell migration upon RHO activation. Phosphorylates ATG4B at 'Ser-383', thereby increasing autophagic flux. Part of the striatin-interacting phosphatase and kinase (STRIPAK) complexes. STRIPAK complexes have critical roles in protein (de)phosphorylation and are regulators of multiple signaling pathways including Hippo, MAPK, nuclear receptor and cytoskeleton remodeling. Different types of STRIPAK complexes are involved in a variety of biological processes such as cell growth, differentiation, apoptosis, metabolism and immune regulation. This is Serine/threonine-protein kinase 26 from Mus musculus (Mouse).